The chain runs to 186 residues: Apolipophorin-3 (186 aa).

A signal peptide spans 1 to 18; that stretch reads MAAKYVFVVAACSALAQA. Residues 19 to 23 constitute a propeptide that is removed on maturation; sequence GIVRR.

This sequence belongs to the insect apolipophorin-3 family. As to quaternary structure, equilibrium between a soluble monomer and a bound lipoprotein form. Apolipophorin-3 associates with lipophorin during lipid loading until each particle contains 9 or 14 molecules of apolipophorin-3. In terms of tissue distribution, expressed in hemolymph. Also found in hemocytes and fat body.

The protein localises to the secreted. Its function is as follows. Assists in the loading of diacylglycerol, generated from triacylglycerol stores in the fat body through the action of adipokinetic hormone, into lipophorin, the hemolymph lipoprotein. It increases the lipid carrying capacity of lipophorin by covering the expanding hydrophobic surface resulting from diacylglycerol uptake. It thus plays a critical role in the transport of lipids during flight in several species of insects. Has antibacterial activity against the Gram-positive bacteria L.monocytogenes (MIC=6.5 uM). Lacks antibacterial activity against the Gram-positive bacteria B.circulans, M.luteus, S.aureus, and S.lutea, and the Gram-negative bacteria E.coli D31, E.coli ATCC 25922, and S.typhimurium. Lacks antifungal activity against S.cerevisiae, P.pastoris, Z.marxianus, C.albicans, C.wickerhamii, A.niger, F.oxysporum, and T.harizianum. This Galleria mellonella (Greater wax moth) protein is Apolipophorin-3.